The sequence spans 698 residues: Elongation factor G (698 aa).

Residues 8-290 (ERYRNIGIAA…AVIEFLPAPN (283 aa)) form the tr-type G domain. Residues 17 to 24 (AHIDAGKT), 88 to 92 (DTPGH), and 142 to 145 (NKMD) contribute to the GTP site.

This sequence belongs to the TRAFAC class translation factor GTPase superfamily. Classic translation factor GTPase family. EF-G/EF-2 subfamily.

The protein localises to the cytoplasm. Its function is as follows. Catalyzes the GTP-dependent ribosomal translocation step during translation elongation. During this step, the ribosome changes from the pre-translocational (PRE) to the post-translocational (POST) state as the newly formed A-site-bound peptidyl-tRNA and P-site-bound deacylated tRNA move to the P and E sites, respectively. Catalyzes the coordinated movement of the two tRNA molecules, the mRNA and conformational changes in the ribosome. This chain is Elongation factor G, found in Halorhodospira halophila (strain DSM 244 / SL1) (Ectothiorhodospira halophila (strain DSM 244 / SL1)).